Here is a 418-residue protein sequence, read N- to C-terminus: Tyrosine--tRNA ligase (418 aa).

Y39 is an L-tyrosine binding site. A 'HIGH' region motif is present at residues 44–53 (CTAASLHVGH). The L-tyrosine site is built by Y176 and Q180. The short motif at 236-240 (KMGKT) is the 'KMSKS' region element. Residue K239 participates in ATP binding. The region spanning 350–418 (IGVLVAFAEK…KKKHVLLRLA (69 aa)) is the S4 RNA-binding domain.

This sequence belongs to the class-I aminoacyl-tRNA synthetase family. TyrS type 1 subfamily. In terms of assembly, homodimer.

The protein localises to the cytoplasm. It carries out the reaction tRNA(Tyr) + L-tyrosine + ATP = L-tyrosyl-tRNA(Tyr) + AMP + diphosphate + H(+). Its function is as follows. Catalyzes the attachment of tyrosine to tRNA(Tyr) in a two-step reaction: tyrosine is first activated by ATP to form Tyr-AMP and then transferred to the acceptor end of tRNA(Tyr). This chain is Tyrosine--tRNA ligase, found in Rhodopseudomonas palustris (strain ATCC BAA-98 / CGA009).